Here is a 204-residue protein sequence, read N- to C-terminus: Large ribosomal subunit protein uL13 (204 aa).

Belongs to the universal ribosomal protein uL13 family.

The polypeptide is Large ribosomal subunit protein uL13 (RpL13A) (Choristoneura parallela (Spotted fireworm moth)).